A 1100-amino-acid chain; its full sequence is SLIT-ROBO Rho GTPase-activating protein 2 (1100 aa).

In terms of domain architecture, F-BAR spans T19–D324. Coiled coils occupy residues Y170 to K201 and G363 to M400. A compositionally biased stretch (basic and acidic residues) spans L181–T203. The segment at L181–L210 is disordered. The region spanning V496–F680 is the Rho-GAP domain. In terms of domain architecture, SH3 spans S738–M797. Disordered regions lie at residues G800–H835 and E852–P938. The segment covering P807–S823 has biased composition (basic and acidic residues). A compositionally biased stretch (polar residues) spans R919–N932. Positions E945–K972 form a coiled coil. Positions K986 to V1100 are disordered. Composition is skewed to polar residues over residues S987–L997 and S1008–F1049. Low complexity predominate over residues S1067–T1081. Residues T1082–T1094 show a composition bias toward pro residues.

The protein localises to the cell membrane. The protein resides in the cell projection. Its subcellular location is the dendritic spine. It localises to the postsynaptic density. It is found in the postsynaptic cell membrane. The protein localises to the lamellipodium. The protein resides in the cytoplasmic vesicle. Its subcellular location is the phagosome. It localises to the nucleus. It is found in the cytoplasm. The protein localises to the cytosol. Its function is as follows. Postsynaptic RAC1 GTPase activating protein (GAP) that plays a key role in neuronal morphogenesis and migration mainly during development of the cerebral cortex. Regulates excitatory and inhibitory synapse maturation and density in cortical pyramidal neurons. Mechanistically, acts by binding and deforming membranes, thereby regulating actin dynamics to regulate cell migration and differentiation. The chain is SLIT-ROBO Rho GTPase-activating protein 2 (srgap2) from Danio rerio (Zebrafish).